The following is a 287-amino-acid chain: Elongation factor Ts (287 aa).

The tract at residues 79-82 is involved in Mg(2+) ion dislocation from EF-Tu; the sequence is TDFV.

The protein belongs to the EF-Ts family.

The protein localises to the cytoplasm. Functionally, associates with the EF-Tu.GDP complex and induces the exchange of GDP to GTP. It remains bound to the aminoacyl-tRNA.EF-Tu.GTP complex up to the GTP hydrolysis stage on the ribosome. The polypeptide is Elongation factor Ts (Anaplasma phagocytophilum (strain HZ)).